Here is a 103-residue protein sequence, read N- to C-terminus: MLLWVLFVILILTSGSHCSLPPSPPFRMQRHVDAIFTTNYRKLLSQLYARKVIQDIMNKQGERIQEQRARLSRQEDSMWTEDKQMTLESILQGFPRMKPSADA.

The first 19 residues, 1-19 (MLLWVLFVILILTSGSHCS), serve as a signal peptide directing secretion. 2 propeptides span residues 20-30 (LPPSPPFRMQR) and 74-103 (QEDSMWTEDKQMTLESILQGFPRMKPSADA).

The protein belongs to the glucagon family.

It is found in the secreted. Its function is as follows. GRF is released by the hypothalamus and acts on the adenohypophyse to stimulate the secretion of growth hormone. This chain is Somatoliberin (Ghrh), found in Mus musculus (Mouse).